Consider the following 202-residue polypeptide: Dephospho-CoA kinase (202 aa).

The DPCK domain maps to 3–202 (IFGLTGGIGS…ISHRSKYLSC (200 aa)). 11-16 (GSGKSL) is a binding site for ATP.

The protein belongs to the CoaE family.

It localises to the cytoplasm. The catalysed reaction is 3'-dephospho-CoA + ATP = ADP + CoA + H(+). The protein operates within cofactor biosynthesis; coenzyme A biosynthesis; CoA from (R)-pantothenate: step 5/5. Its function is as follows. Catalyzes the phosphorylation of the 3'-hydroxyl group of dephosphocoenzyme A to form coenzyme A. The sequence is that of Dephospho-CoA kinase from Ehrlichia chaffeensis (strain ATCC CRL-10679 / Arkansas).